We begin with the raw amino-acid sequence, 292 residues long: Bifunctional protein FolD (292 aa).

Residues 169–171 (GRG), T196, and V237 contribute to the NADP(+) site.

It belongs to the tetrahydrofolate dehydrogenase/cyclohydrolase family. Homodimer.

It carries out the reaction (6R)-5,10-methylene-5,6,7,8-tetrahydrofolate + NADP(+) = (6R)-5,10-methenyltetrahydrofolate + NADPH. The catalysed reaction is (6R)-5,10-methenyltetrahydrofolate + H2O = (6R)-10-formyltetrahydrofolate + H(+). It participates in one-carbon metabolism; tetrahydrofolate interconversion. Catalyzes the oxidation of 5,10-methylenetetrahydrofolate to 5,10-methenyltetrahydrofolate and then the hydrolysis of 5,10-methenyltetrahydrofolate to 10-formyltetrahydrofolate. The polypeptide is Bifunctional protein FolD (Bifidobacterium longum (strain NCC 2705)).